A 181-amino-acid polypeptide reads, in one-letter code: Bradykinin-potentiating and C-type natriuretic peptides (181 aa).

A signal peptide spans methionine 1 to glycine 23. Residues lysine 24–serine 30 constitute a propeptide that is removed on maturation. Position 31 is a pyrrolidone carboxylic acid (glutamine 31). Positions leucine 41–valine 43 are excised as a propeptide. Position 44 is a pyrrolidone carboxylic acid (glutamine 44). 2 propeptides span residues threonine 50–aspartate 78 and glycine 90–alanine 157. The interval glutamate 74–leucine 153 is disordered. Residues serine 104 to serine 114 are compositionally biased toward low complexity. Residues alanine 140–alanine 150 are compositionally biased toward gly residues. A disulfide bridge links cysteine 165 with cysteine 181.

It in the N-terminal section; belongs to the bradykinin-potentiating peptide family. The protein in the C-terminal section; belongs to the natriuretic peptide family. As to expression, venom gland.

Its subcellular location is the secreted. In terms of biological role, bradykinin-potentiating peptide both inhibits the activity of the angiotensin-converting enzyme (ACE) and enhances the action of bradykinin by inhibiting the peptidases that inactivate it. It acts as an indirect hypotensive agent. Functionally, antagonizes the vasodilatory actions of bradykinin at the B2 bradykinin receptor. Has no demonstrable hypotensive activity when injected intravenously in rats. Has a vasorelaxant activity in rat aortic strips and a diuretic potency in anesthetized rats. May act by activating natriuretic receptors (NPR1 and/or NPR2). This chain is Bradykinin-potentiating and C-type natriuretic peptides, found in Crotalus durissus collilineatus (Brazilian rattlesnake).